A 143-amino-acid polypeptide reads, in one-letter code: Peptide methionine sulfoxide reductase B8 (143 aa).

One can recognise a MsrB domain in the interval 18–139; sequence DEEWRAVLSP…NSVSLKFASA (122 aa). Residues Cys57, Cys60, Cys103, and Cys106 each coordinate Zn(2+). An intrachain disulfide couples Cys75 to Cys128. Cys128 functions as the Nucleophile in the catalytic mechanism.

This sequence belongs to the MsrB Met sulfoxide reductase family. Requires Zn(2+) as cofactor.

It is found in the cytoplasm. Its subcellular location is the cytosol. It carries out the reaction L-methionyl-[protein] + [thioredoxin]-disulfide + H2O = L-methionyl-(R)-S-oxide-[protein] + [thioredoxin]-dithiol. Its function is as follows. Catalyzes the reduction of methionine sulfoxide (MetSO) to methionine in proteins. Plays a protective role against oxidative stress by restoring activity to proteins that have been inactivated by methionine oxidation. MSRB family specifically reduces the MetSO R-enantiomer. The chain is Peptide methionine sulfoxide reductase B8 (MSRB8) from Arabidopsis thaliana (Mouse-ear cress).